The sequence spans 1007 residues: MAATEPPSLREQAEMDDADNSEKSVNEENGEVSEDQSQNKHSRHKKKKHKHRSKHKKHKHSSEEDRDKKHKHKHKHKKHKRKEVIEASDKEGLSPAKRTKLDDLALLEDLEKQRALIKAELDNELMEGKVQSGMGLILQGYESGSEEEGEIHEKARNGNRSSTRSSSTRGKLEITDNKNSAKKRSKSRSKERTRHRSDKRKSKGAGEMLREKANRSKSKERRKSKSPSKRSKSQDQARKSKSPPLRRRSQEKVGKARSPAEEKMKSEEKGKIKDRKKSPIVNERSRDRSKKSKSPVDLRDKSKDRRSRSKERKSKRSEIDKEKKPIKSPSKDASSGKENRSPSRRPGRSPKRRSLSPKLRDKSRRSRSPLLNDRRSKQSKSPSRTLSPGRRAKSRSLERKRREPERRRLSSPRTRPRDDILGRCERSKDASPINRWSPTRRRSRSPIRRRSRSPLRRSRSPRRRSRSPRRRDRSRRSRSRLRRRSRSRGGHRRRSRSKVKEDKFKGSLSEGMKVEQESSSDDNLEDFDVEEEDEEALIEQRRIQRQAIVQKYKYLAEDSNISVPSEPSSPQSSTRSRSPSPDDILERVAADVKEYERENVDTFEASVKAKHNLMTVEQNNGSSQKKILAPDMFTESDDMFAAYFDSARLRAAGIGKDFKENPNLRDNWTDAEGYYRVNIGEVLDKRYNVYGYTGQGVFSNVVRARDNARANQEVAVKIIRNNELMQKTGLKELEFLKKLNDADPDDKFHCLRLFRHFYHKQHLCLVFEPLSMNLREVLKKYGKDVGLHIKAVRSYSQQLFLALKLLKRCNILHADIKPDNILVNESKTILKLCDFGSASHVADNDITPYLVSRFYRAPEIIIGKSYDYGIDMWSVGCTLYELYTGKILFPGKTNNHMLKLAMDLKGKMPNKMIRKGVFKDQHFDQNLNFMYIEVDKVTEREKVTVMSTINPTKDLLADLIGCQRLPEDQRKKVHQLKDLLDQILMLDPAKRISINQALQHAFIQEKI.

Residues 1 to 102 (MAATEPPSLR…LSPAKRTKLD (102 aa)) are disordered. Ala-2 is subject to N-acetylalanine. Ser-8, Ser-21, Ser-24, and Ser-33 each carry phosphoserine. Basic residues-rich tracts occupy residues 40–60 (KHSR…KHKH) and 68–82 (KKHK…HKRK). Basic and acidic residues predominate over residues 83-92 (EVIEASDKEG). Ser-88 and Ser-94 each carry phosphoserine. An N6-acetyllysine; alternate modification is found at Lys-100. Residue Lys-100 forms a Glycyl lysine isopeptide (Lys-Gly) (interchain with G-Cter in SUMO2); alternate linkage. A Glycyl lysine isopeptide (Lys-Gly) (interchain with G-Cter in SUMO2) cross-link involves residue Lys-112. A Glycyl lysine isopeptide (Lys-Gly) (interchain with G-Cter in SUMO2); alternate cross-link involves residue Lys-118. Residue Lys-118 forms a Glycyl lysine isopeptide (Lys-Gly) (interchain with G-Cter in SUMO1); alternate linkage. A Phosphoserine modification is found at Ser-132. Phosphotyrosine is present on Tyr-141. 2 disordered regions span residues 141–535 (YESG…EDEE) and 560–583 (NISV…SPDD). Ser-143, Ser-145, and Ser-167 each carry phosphoserine. Residues 158 to 169 (GNRSSTRSSSTR) show a composition bias toward low complexity. Glycyl lysine isopeptide (Lys-Gly) (interchain with G-Cter in SUMO2) cross-links involve residues Lys-171 and Lys-178. 2 stretches are compositionally biased toward basic residues: residues 180 to 203 (SAKK…RKSK) and 215 to 231 (RSKS…SKRS). A phosphoserine mark is found at Ser-240, Ser-242, Ser-258, Ser-278, Ser-292, and Ser-294. Over residues 248 to 271 (RSQEKVGKARSPAEEKMKSEEKGK) the composition is skewed to basic and acidic residues. The segment covering 294–303 (SPVDLRDKSK) has biased composition (basic and acidic residues). Residues 304–315 (DRRSRSKERKSK) show a composition bias toward basic residues. Positions 316-325 (RSEIDKEKKP) are enriched in basic and acidic residues. Residues Ser-328, Ser-354, Ser-356, Ser-366, and Ser-368 each carry the phosphoserine modification. Basic residues predominate over residues 342 to 367 (PSRRPGRSPKRRSLSPKLRDKSRRSR). Position 385 is a phosphothreonine (Thr-385). Ser-387 bears the Phosphoserine mark. 2 stretches are compositionally biased toward basic and acidic residues: residues 395–408 (RSLE…ERRR) and 415–429 (RPRD…RSKD). A phosphoserine mark is found at Ser-427, Ser-431, and Ser-437. The segment covering 438–497 (PTRRRSRSPIRRRSRSPLRRSRSPRRRSRSPRRRDRSRRSRSRLRRRSRSRGGHRRRSRS) has biased composition (basic residues). Phosphoserine is present on residues Ser-518, Ser-519, Ser-520, Ser-565, Ser-569, Ser-576, Ser-578, and Ser-580. A compositionally biased stretch (acidic residues) spans 518–535 (SSSDDNLEDFDVEEEDEE). Over residues 562-581 (SVPSEPSSPQSSTRSRSPSP) the composition is skewed to low complexity. Residues Lys-593 and Lys-659 each participate in a glycyl lysine isopeptide (Lys-Gly) (interchain with G-Cter in SUMO2) cross-link. A Protein kinase domain is found at 687–1006 (YNVYGYTGQG…ALQHAFIQEK (320 aa)). ATP-binding positions include 693–701 (TGQGVFSNV) and Lys-717. Lys-717 is modified (N6-acetyllysine). Asp-815 functions as the Proton acceptor in the catalytic mechanism. Residue Tyr-849 is modified to Phosphotyrosine. Position 852 is a phosphoserine (Ser-852).

Belongs to the protein kinase superfamily. CMGC Ser/Thr protein kinase family. In terms of assembly, interacts with CLK1 C-terminus. Associates with the U5 snRNP and NCOR1 deacetylase complexes. Identified in the spliceosome C complex. Post-translationally, phosphorylated by CLK1. Autophosphorylated; phosphorylation inhibits interaction with its targets, such as PRPF6 or SMARCA4.

It is found in the nucleus. It localises to the chromosome. The protein resides in the centromere. The protein localises to the kinetochore. The enzyme catalyses L-seryl-[protein] + ATP = O-phospho-L-seryl-[protein] + ADP + H(+). It catalyses the reaction L-threonyl-[protein] + ATP = O-phospho-L-threonyl-[protein] + ADP + H(+). Functionally, serine/threonine kinase involved in spliceosomal assembly as well as mitosis and signaling regulation. Connects chromatin mediated regulation of transcription and pre-mRNA splicing. During spliceosomal assembly, interacts with and phosphorylates PRPF6 and PRPF31, components of the U4/U6-U5 tri-small nuclear ribonucleoprotein (snRNP), to facilitate the formation of the spliceosome B complex. Plays a role in regulating transcription and the spindle assembly checkpoint (SAC). Associates with U5 snRNP and NCOR1 deacetylase complexes which may allow a coordination of pre-mRNA splicing with chromatin remodeling events involved in transcriptional regulation. Associates and probably phosphorylates SMARCA4 and NCOR1. Phosphorylates SRSF1. Associates with kinetochores during mitosis and is necessary for recruitment and maintenance of the checkpoint proteins such as MAD1L1 and MAD12L1 at the kinetochores. Phosphorylates and regulates the activity of the transcription factors such as ELK1 and KLF13. Phosphorylates nuclear YAP1 and WWTR1/TAZ which induces nuclear exclusion and regulates Hippo signaling pathway, involved in tissue growth control. This is Serine/threonine-protein kinase PRP4 homolog (Prp4k) from Mus musculus (Mouse).